A 207-amino-acid chain; its full sequence is Transcriptional regulator GfcR (207 aa).

This sequence belongs to the purine/pyrimidine phosphoribosyltransferase family. GfcR subfamily.

The sequence is that of Transcriptional regulator GfcR from Methanocella arvoryzae (strain DSM 22066 / NBRC 105507 / MRE50).